Reading from the N-terminus, the 508-residue chain is Mitochondrial distribution and morphology protein 10 (508 aa).

The interval 160–195 (PAHPTSTRPTPPQTPPSHTRQPSEPSTPAPSPTPGN) is disordered.

The protein belongs to the MDM10 family. As to quaternary structure, component of the ER-mitochondria encounter structure (ERMES) or MDM complex, composed of MMM1, MDM10, MDM12 and MDM34. Associates with the mitochondrial outer membrane sorting assembly machinery SAM(core) complex.

Its subcellular location is the mitochondrion outer membrane. Component of the ERMES/MDM complex, which serves as a molecular tether to connect the endoplasmic reticulum and mitochondria. Components of this complex are involved in the control of mitochondrial shape and protein biogenesis and may function in phospholipid exchange. MDM10 is involved in the late assembly steps of the general translocase of the mitochondrial outer membrane (TOM complex). Functions in the TOM40-specific route of the assembly of outer membrane beta-barrel proteins, including the association of TOM40 with the receptor TOM22 and small TOM proteins. Can associate with the SAM(core) complex as well as the MDM12-MMM1 complex, both involved in late steps of the major beta-barrel assembly pathway, that is responsible for biogenesis of all outer membrane beta-barrel proteins. May act as a switch that shuttles between both complexes and channels precursor proteins into the TOM40-specific pathway. Plays a role in mitochondrial morphology and in the inheritance of mitochondria. The protein is Mitochondrial distribution and morphology protein 10 of Cryptococcus neoformans var. neoformans serotype D (strain B-3501A) (Filobasidiella neoformans).